The sequence spans 276 residues: HTH-type transcriptional activator RhaR (276 aa).

The 99-residue stretch at 174–272 folds into the HTH araC/xylS-type domain; it reads ESLFSALNQS…SCTPTEYRSR (99 aa). 2 consecutive DNA-binding regions (H-T-H motif) follow at residues 191–212 and 239–262; these read ADFCRQHQLAVSSVRRIFKQQT and VANIAIRCGYSDSNYFSSVFGKTF.

As to quaternary structure, binds DNA as a dimer.

Its subcellular location is the cytoplasm. In terms of biological role, activates expression of the rhaSR operon in response to L-rhamnose. The protein is HTH-type transcriptional activator RhaR of Mannheimia succiniciproducens (strain KCTC 0769BP / MBEL55E).